The sequence spans 851 residues: Putative cell signaling protein (851 aa).

Composition is skewed to basic and acidic residues over residues Lys-165–Asn-176, Asp-196–Lys-223, and Ser-767–Asp-781. Disordered regions lie at residues Lys-165 to Lys-223 and Asp-714 to Asp-781.

Post-translationally, palmitoylated.

This is Putative cell signaling protein from Schizosaccharomyces pombe (strain 972 / ATCC 24843) (Fission yeast).